A 565-amino-acid polypeptide reads, in one-letter code: Dihydroxy-acid dehydratase (565 aa).

Asp80 contacts Mg(2+). Cys121 serves as a coordination point for [2Fe-2S] cluster. Mg(2+) contacts are provided by Asp122 and Lys123. Lys123 carries the post-translational modification N6-carboxylysine. A [2Fe-2S] cluster-binding site is contributed by Cys194. Glu447 contributes to the Mg(2+) binding site. Ser473 (proton acceptor) is an active-site residue.

The protein belongs to the IlvD/Edd family. In terms of assembly, homodimer. [2Fe-2S] cluster is required as a cofactor. Mg(2+) serves as cofactor.

The catalysed reaction is (2R)-2,3-dihydroxy-3-methylbutanoate = 3-methyl-2-oxobutanoate + H2O. It catalyses the reaction (2R,3R)-2,3-dihydroxy-3-methylpentanoate = (S)-3-methyl-2-oxopentanoate + H2O. The protein operates within amino-acid biosynthesis; L-isoleucine biosynthesis; L-isoleucine from 2-oxobutanoate: step 3/4. It functions in the pathway amino-acid biosynthesis; L-valine biosynthesis; L-valine from pyruvate: step 3/4. Functions in the biosynthesis of branched-chain amino acids. Catalyzes the dehydration of (2R,3R)-2,3-dihydroxy-3-methylpentanoate (2,3-dihydroxy-3-methylvalerate) into 2-oxo-3-methylpentanoate (2-oxo-3-methylvalerate) and of (2R)-2,3-dihydroxy-3-methylbutanoate (2,3-dihydroxyisovalerate) into 2-oxo-3-methylbutanoate (2-oxoisovalerate), the penultimate precursor to L-isoleucine and L-valine, respectively. The chain is Dihydroxy-acid dehydratase from Pelodictyon phaeoclathratiforme (strain DSM 5477 / BU-1).